The sequence spans 757 residues: Vitamin K-dependent gamma-carboxylase (757 aa).

The residue at position 2 (Ala2) is an N-acetylalanine. Topologically, residues 2 to 60 (AVHRGSALVAPASDKVQKNKSAQTSGLKQGSRMEKILGFEWTDLSSWQSVVTLLNKPTD) are cytoplasmic. Residues 61 to 81 (PANLAVFRFLFAFLMLLDIPQ) form a helical membrane-spanning segment. Residues 82–113 (ERGLSSLDRKYLDGLDVCRFPLLDALRPLPLD) are Lumenal-facing. Cys99 and Cys450 form a disulfide bridge. The chain crosses the membrane as a helical span at residues 114–134 (WMYLVYTIMFLGALGMMLGLC). Residues 135–136 (YR) lie on the Cytoplasmic side of the membrane. A helical transmembrane segment spans residues 137–157 (LSCVLFLLPYWYVFLLDKTSW). The Lumenal portion of the chain corresponds to 158 to 292 (NNHSYLYGLL…VSYFHCMNSQ (135 aa)). The helical transmembrane segment at 293–313 (LFSIGMFPYVMLASSPLFCSA) threads the bilayer. The Cytoplasmic segment spans residues 314–361 (EWPRKLVARCPKRLQELLPTKAAPRPSASCVYKRSRGKAGPKPGLRHQ). The chain crosses the membrane as a helical span at residues 362–382 (LGAIFTLLYLLEQLFLPYSHF). Residues 383-757 (LTQGYNNWTN…PDSEHVHSEF (375 aa)) lie on the Lumenal side of the membrane. The segment at 729 to 757 (EPVDESSASNTDSSNHPSEPDSEHVHSEF) is disordered. Residues 734 to 745 (SSASNTDSSNHP) show a composition bias toward polar residues. Over residues 746–757 (SEPDSEHVHSEF) the composition is skewed to basic and acidic residues.

Belongs to the vitamin K-dependent gamma-carboxylase family. Monomer. May interact with CALU.

It is found in the endoplasmic reticulum membrane. It catalyses the reaction 4-carboxy-L-glutamyl-[protein] + 2,3-epoxyphylloquinone + H2O + H(+) = phylloquinol + L-glutamyl-[protein] + CO2 + O2. Mediates the vitamin K-dependent carboxylation of glutamate residues to calcium-binding gamma-carboxyglutamate (Gla) residues with the concomitant conversion of the reduced hydroquinone form of vitamin K to vitamin K epoxide. Catalyzes gamma-carboxylation of various proteins, such as blood coagulation factors (F2, F7, F9 and F10), osteocalcin (bglap and bglap2) or matrix Gla protein (MGP). This is Vitamin K-dependent gamma-carboxylase (Ggcx) from Mus musculus (Mouse).